A 156-amino-acid polypeptide reads, in one-letter code: Protein-export protein SecB (156 aa).

This sequence belongs to the SecB family. As to quaternary structure, homotetramer, a dimer of dimers. One homotetramer interacts with 1 SecA dimer.

It localises to the cytoplasm. Its function is as follows. One of the proteins required for the normal export of preproteins out of the cell cytoplasm. It is a molecular chaperone that binds to a subset of precursor proteins, maintaining them in a translocation-competent state. It also specifically binds to its receptor SecA. The chain is Protein-export protein SecB from Xanthobacter autotrophicus (strain ATCC BAA-1158 / Py2).